We begin with the raw amino-acid sequence, 233 residues long: DNA repair protein RecO (233 aa).

Belongs to the RecO family.

In terms of biological role, involved in DNA repair and RecF pathway recombination. The chain is DNA repair protein RecO from Pseudomonas aeruginosa (strain LESB58).